The primary structure comprises 269 residues: Phosphonoacetaldehyde hydrolase (269 aa).

Aspartate 10 acts as the Nucleophile in catalysis. Residues aspartate 10 and alanine 12 each coordinate Mg(2+). Catalysis depends on lysine 52, which acts as the Schiff-base intermediate with substrate. Aspartate 186 contacts Mg(2+).

It belongs to the HAD-like hydrolase superfamily. PhnX family. Homodimer. Mg(2+) is required as a cofactor.

It catalyses the reaction phosphonoacetaldehyde + H2O = acetaldehyde + phosphate + H(+). In terms of biological role, involved in phosphonate degradation. The chain is Phosphonoacetaldehyde hydrolase from Salmonella typhi.